The chain runs to 122 residues: UPF0102 protein CPR_1677 (122 aa).

This sequence belongs to the UPF0102 family.

This is UPF0102 protein CPR_1677 from Clostridium perfringens (strain SM101 / Type A).